Here is a 675-residue protein sequence, read N- to C-terminus: Protein PALS1 (675 aa).

Disordered regions lie at residues 1-32 (MTTS…HPKH) and 52-79 (RSAQ…KQEL). The required for the correct localization of PALS1 and PATJ at cell-cell contacts and the normal formation of tight junctions and adherens junctions stretch occupies residues 1 to 345 (MTTSYMNGHV…QQIKPPPAKE (345 aa)). Residues Ser14 and Ser25 each carry the phosphoserine modification. Residues 21–140 (LGLASPEEHP…LKHIQHTLVD (120 aa)) are interaction with PARD6B. The span at 54-79 (AQLERIRQQQEDMRRRREEEGKKQEL) shows a compositional bias: basic and acidic residues. Ser83 and Ser84 each carry phosphoserine. L27 domains lie at 120–177 (KILE…NKAS) and 179–235 (PFPL…MQLE). The segment at 181–243 (PLIANVQDLV…LEPITDERVY (63 aa)) is interaction with LIN7C. The 81-residue stretch at 256–336 (IVRIEKARDI…TLTFVLIPSQ (81 aa)) folds into the PDZ domain. Residues 345 to 417 (ETVIHVKAHF…PGKSFQQQRE (73 aa)) enclose the SH3 domain. Positions 479–660 (KRPIILIGPQ…AYQELLRLIN (182 aa)) constitute a Guanylate kinase-like domain. 486-493 (GPQNCGQN) serves as a coordination point for ATP.

Belongs to the MAGUK family. Heterodimer with MPP1. Forms a heterotrimeric complex composed of PALS1, LIN7B and PATJ; the N-terminal L27 domain of PALS1 interacts with the L27 domain of PATJ and the C-terminal L27 domain of PALS1 interacts with the L27 domain of LIN7B. Component of a complex composed of PALS1, CRB1 and MPP4. Component of a complex whose core is composed of ARHGAP17, AMOT, PALS1, PATJ and PARD3/PAR3. Component of a complex composed of PALS1, CRB1 and EPB41L5. Within the complex, interacts (via HOOK domain) with EPB41L5 (via FERM domain), and interacts with CRB1 (via intracellular domain). Component of a complex composed of PALS1, MPP3 and CRB1; PALS1 acts as a bridging protein between MPP3 (via guanylate kinase-like domain) and CRB1. Component of a complex composed of CRB3, PALS1 and PATJ. As part of the Crumbs complex; interacts with WWP1, the interaction is enhanced by AMOTL2 and facilitates WWP1 localization to the plasma membrane. The Crumbs complex promotes monoubiquitination of AMOTL2 by WWP1, which activates the Hippo signaling pathway. Interacts (via PDZ domain) with PATJ (via N-terminus). Interacts with EZR. Interacts (via PDZ domain) with CRB1 (via C-terminal ERLI motif). While the PDZ domain is sufficient for interaction with CRB1, the adjacent SH3 and guanylate kinase-like domains are likely to contribute to a high affinity interaction. Interacts with WWTR1/TAZ (via WW domain). Interacts with MPP7. Interacts (via PDZ domain) with CRB3 (via C-terminus). Interacts with LIN7C. Interacts with MPDZ. Interacts with PARD6B. Interacts with SC6A1. Interacts with CDH5; the interaction promotes PALS1 localization to cell junctions and is required for CDH5-mediated vascular lumen formation and endothelial cell. Interacts with NPHP1 (via coiled coil and SH3 domains). Interacts with NPHP4. Interacts with CRB2.

It is found in the golgi apparatus. The protein resides in the cell membrane. It localises to the endomembrane system. The protein localises to the cell junction. Its subcellular location is the tight junction. It is found in the adherens junction. The protein resides in the cell projection. It localises to the axon. The protein localises to the perikaryon. Its subcellular location is the apical cell membrane. Plays a role in tight junction biogenesis and in the establishment of cell polarity in epithelial cells. Also involved in adherens junction biogenesis by ensuring correct localization of the exocyst complex protein EXOC4/SEC8 which allows trafficking of adherens junction structural component CDH1 to the cell surface. Plays a role through its interaction with CDH5 in vascular lumen formation and endothelial membrane polarity. Required during embryonic and postnatal retinal development. Required for the maintenance of cerebellar progenitor cells in an undifferentiated proliferative state, preventing premature differentiation, and is required for cerebellar histogenesis, fissure formation, cerebellar layer organization and cortical development. Plays a role in neuronal progenitor cell survival, potentially via promotion of mTOR signaling. Plays a role in the radial and longitudinal extension of the myelin sheath in Schwann cells. May modulate SC6A1/GAT1-mediated GABA uptake by stabilizing the transporter. May play a role in the T-cell receptor-mediated activation of NF-kappa-B. Required for localization of EZR to the apical membrane of parietal cells and may play a role in the dynamic remodeling of the apical cytoskeleton. Required for the normal polarized localization of the vesicular marker STX4. Required for the correct trafficking of the myelin proteins PMP22 and MAG. Involved in promoting phosphorylation and cytoplasmic retention of transcriptional coactivators YAP1 and WWTR1/TAZ which leads to suppression of TGFB1-dependent transcription of target genes such as CCN2/CTGF, SERPINE1/PAI1, SNAI1/SNAIL1 and SMAD7. This is Protein PALS1 from Rattus norvegicus (Rat).